The following is a 300-amino-acid chain: Urease accessory protein UreD (300 aa).

This sequence belongs to the UreD family. UreD, UreF and UreG form a complex that acts as a GTP-hydrolysis-dependent molecular chaperone, activating the urease apoprotein by helping to assemble the nickel containing metallocenter of UreC. The UreE protein probably delivers the nickel.

The protein resides in the cytoplasm. In terms of biological role, required for maturation of urease via the functional incorporation of the urease nickel metallocenter. This chain is Urease accessory protein UreD, found in Prochlorococcus marinus (strain MIT 9215).